A 508-amino-acid chain; its full sequence is Serine carboxypeptidase 3 (508 aa).

Residues 1 to 19 (MVTTPRLVSLLLLLALCAA) form the signal peptide. Residues 20-80 (AAGALRLPPD…PGQLLERRVT (61 aa)) constitute a propeptide that is removed on maturation. The tract at residues 48 to 67 (PKDSSSSSGRHGARVGEGNE) is disordered. Leucine 81 bears the Blocked amino end (Leu) mark. 3 disulfide bridges follow: cysteine 133-cysteine 373, cysteine 301-cysteine 316, and cysteine 339-cysteine 344. Asparagine 151 carries an N-linked (GlcNAc...) asparagine glycan. The active site involves serine 223. Aspartate 411 is an active-site residue. A substrate-binding site is contributed by cysteine 414. Residue histidine 468 is part of the active site. Residues 492 to 508 (EAVPEEESSTTSFYAAM) constitute a propeptide that is removed on maturation.

This sequence belongs to the peptidase S10 family. Monomer.

Its subcellular location is the secreted. It carries out the reaction Release of a C-terminal amino acid with broad specificity.. With respect to regulation, inhibited by mercuric ions. The protein is Serine carboxypeptidase 3 (CBP3) of Hordeum vulgare (Barley).